The primary structure comprises 443 residues: Clustered-asparagine-rich protein (443 aa).

The RRM 1 domain occupies 16-106 (TKLHIQNIPP…RNIDAKFAVP (91 aa)). A disordered region spans residues 253–279 (NHLNNNNNNINNNNNNNNNNNNNNNVM). Positions 256 to 277 (NNNNNNINNNNNNNNNNNNNNN) are enriched in low complexity. Positions 342-435 (SSITIMKKQN…KYLKVQLKKG (94 aa)) constitute an RRM 2 domain.

The chain is Clustered-asparagine-rich protein from Plasmodium falciparum.